A 120-amino-acid chain; its full sequence is uncharacterized protein (120 aa).

This is an uncharacterized protein from Archaeoglobus fulgidus (strain ATCC 49558 / DSM 4304 / JCM 9628 / NBRC 100126 / VC-16).